The primary structure comprises 301 residues: Small ribosomal subunit biogenesis GTPase RsgA (301 aa).

A CP-type G domain is found at 65–224 (YNQLIRPKVA…LVDTPGFGNL (160 aa)). Residues 115 to 118 (SKYD) and 167 to 175 (GNSGVGKST) each bind GTP. Zn(2+) is bound by residues Cys-247, Cys-252, His-254, and Cys-260.

This sequence belongs to the TRAFAC class YlqF/YawG GTPase family. RsgA subfamily. In terms of assembly, monomer. Associates with 30S ribosomal subunit, binds 16S rRNA. Zn(2+) serves as cofactor.

The protein localises to the cytoplasm. In terms of biological role, one of several proteins that assist in the late maturation steps of the functional core of the 30S ribosomal subunit. Helps release RbfA from mature subunits. May play a role in the assembly of ribosomal proteins into the subunit. Circularly permuted GTPase that catalyzes slow GTP hydrolysis, GTPase activity is stimulated by the 30S ribosomal subunit. The sequence is that of Small ribosomal subunit biogenesis GTPase RsgA from Ureaplasma urealyticum serovar 10 (strain ATCC 33699 / Western).